Consider the following 700-residue polypeptide: ATP-dependent zinc metalloprotease FtsH (700 aa).

The Cytoplasmic portion of the chain corresponds to 1–10 (MNNNKGGFLR). A helical transmembrane segment spans residues 11-31 (SSVFYIFIFLAVVGMVYGLFG). The Extracellular segment spans residues 32–130 (NDKTTTKTIT…LVTKQAENSG (99 aa)). A helical membrane pass occupies residues 131–151 (FWLNLLVSLVPVLLIVAVFYL). At 152–700 (MMNQAGGGKG…ETDDNNTENK (549 aa)) the chain is on the cytoplasmic side. 227-234 (GPPGTGKT) contributes to the ATP binding site. Residue His-449 coordinates Zn(2+). Residue Glu-450 is part of the active site. Positions 453 and 525 each coordinate Zn(2+). The segment at 644-700 (KSFEEAKAAADAKDSQAEQRFEKQDEEKSSDDHSESKNEDTDSTDKSETDDNNTENK) is disordered.

In the central section; belongs to the AAA ATPase family. The protein in the C-terminal section; belongs to the peptidase M41 family. Homohexamer. It depends on Zn(2+) as a cofactor.

It localises to the cell membrane. Its function is as follows. Acts as a processive, ATP-dependent zinc metallopeptidase for both cytoplasmic and membrane proteins. Plays a role in the quality control of integral membrane proteins. The sequence is that of ATP-dependent zinc metalloprotease FtsH from Leuconostoc mesenteroides subsp. mesenteroides (strain ATCC 8293 / DSM 20343 / BCRC 11652 / CCM 1803 / JCM 6124 / NCDO 523 / NBRC 100496 / NCIMB 8023 / NCTC 12954 / NRRL B-1118 / 37Y).